The primary structure comprises 496 residues: Ankyrin repeat domain-containing protein 34A (496 aa).

ANK repeat units follow at residues 4–33 (TEGH…YVNE), 37–72 (QGET…DPNI), 76–106 (LGRT…DPSV), and 110–139 (AGAS…AKGT). Q15 carries the N5-methylglutamine modification. Polar residues-rich tracts occupy residues 147–162 (DTSP…YLNS) and 180–191 (FCTSPSEIQLQT). A disordered region spans residues 147–473 (DTSPSGTKKT…TKRKLVRRHS (327 aa)). A compositionally biased stretch (basic and acidic residues) spans 204-214 (AQEEEEKRDVF). The segment covering 218 to 233 (LPKPPDDPSPSEPLPK) has biased composition (pro residues). Basic residues predominate over residues 234–243 (PPRHPPKPLK). T316 carries the phosphothreonine modification. Residues 463 to 473 (RTKRKLVRRHS) are compositionally biased toward basic residues.

Belongs to the ANKRD34 family. In terms of processing, methylated at Gln-15 by N6AMT1.

This is Ankyrin repeat domain-containing protein 34A (ANKRD34A) from Homo sapiens (Human).